Reading from the N-terminus, the 155-residue chain is RNA pyrophosphohydrolase (155 aa).

Positions 6-148 constitute a Nudix hydrolase domain; the sequence is GYRANVAIVL…KQEVYRKALT (143 aa). Positions 38–59 match the Nudix box motif; that stretch reads GGVATGETPLQAMYRELHEEIG.

This sequence belongs to the Nudix hydrolase family. RppH subfamily. A divalent metal cation is required as a cofactor.

Its function is as follows. Accelerates the degradation of transcripts by removing pyrophosphate from the 5'-end of triphosphorylated RNA, leading to a more labile monophosphorylated state that can stimulate subsequent ribonuclease cleavage. The chain is RNA pyrophosphohydrolase from Francisella tularensis subsp. tularensis (strain FSC 198).